We begin with the raw amino-acid sequence, 211 residues long: Thymidylate kinase (211 aa).

11–18 (GPDGAGKT) is a binding site for ATP.

It belongs to the thymidylate kinase family.

The enzyme catalyses dTMP + ATP = dTDP + ADP. Functionally, phosphorylation of dTMP to form dTDP in both de novo and salvage pathways of dTTP synthesis. This is Thymidylate kinase from Streptococcus pyogenes serotype M3 (strain ATCC BAA-595 / MGAS315).